We begin with the raw amino-acid sequence, 2327 residues long: Genome polyprotein (2327 aa).

A Peptidase C28 domain is found at Met1 to Lys201. Residues Met1–Leu1475 lie on the Cytoplasmic side of the membrane. Active-site for leader protease activity residues include Cys51, His148, and Asp163. 2 disordered regions span residues Lys199 to Asn218 and Gln238 to Asn265. A lipid anchor (N-myristoyl glycine; by host) is attached at Gly202. Polar residues-rich tracts occupy residues Gly204 to Asn218 and Gln238 to Gly251. Over residues Ser252–Asn265 the composition is skewed to low complexity. The interval Ala787–Tyr795 is antigenic epitope. Residues Arg864 to Asp866 carry the Cell attachment site motif. The region spanning Asn1184 to Asp1348 is the SF3 helicase domain. Residue Gly1212–Ser1219 participates in ATP binding. Residues Lys1476–Ile1496 lie within the membrane without spanning it. Over Arg1497–Ala2327 the chain is Cytoplasmic. 2 stretches are compositionally biased toward basic and acidic residues: residues Lys1524–Pro1533 and Phe1544–Val1558. The disordered stretch occupies residues Lys1524–Pro1579. An O-(5'-phospho-RNA)-tyrosine mark is found at Tyr1576, Tyr1599, and Tyr1623. Residues Ala1647–Leu1843 enclose the Peptidase C3 domain. The active-site For protease 3C activity; Proton donor/acceptor is His1690. Active-site for protease 3C activity residues include Asp1728 and Cys1807. Positions Met1873–Thr1881 match the Nuclear localization signal motif. Residues Arg2091–Ala2209 form the RdRp catalytic domain. The active-site For RdRp activity is the Asp2195.

It belongs to the picornaviruses polyprotein family. In terms of assembly, interacts with host ISG15. As to quaternary structure, interacts (via R-G-D motif) with host ITGAV/ITGB6. Interacts with host MAVS; this interaction inhibits binding of host TRAF3 to MAVS, thereby suppressing interferon-mediated responses. Forms homooligomers. In terms of assembly, homohexamer. Interacts with host VIM. Interacts with host BECN1. As to quaternary structure, interacts with host DCTN3. Interacts with RNA-dependent RNA polymerase; this interaction allows 3B-1 to binds 2 polymerases and act as a primer. It also allows the recruitment of the RNA-dependent RNA polymerase to host membranes. In terms of assembly, interacts with RNA-dependent RNA polymerase; this interaction allows 3B-2 to act as a primer. As to quaternary structure, interacts with RNA-dependent RNA polymerase; this interaction allows 3B-3 to act as a primer. Interacts with 3B-1; this interaction allows 3B-1 to binds 2 polymerases and act as a primer. It also allows the recruitment of the RNA-dependent RNA polymerase to host membranes. Interacts with 3B-2; this interaction allows 3B-2 to act as a primer. Interacts with 3B-3; this interaction allows 3B-3 to act as a primer. Removes six residues from its own C-terminus, generating sLb(pro). In terms of processing, specific enzymatic cleavages in vivo by the viral proteases yield a variety of precursors and mature proteins. The polyprotein seems to be cotranslationally cleaved at the 2A/2B junction by a ribosomal skip from one codon to the next without formation of a peptide bond. This process would release the L-P1-2A peptide from the translational complex. Post-translationally, during virion maturation, immature virions are rendered infectious following cleavage of VP0 into VP4 and VP2. This maturation seems to be an autocatalytic event triggered by the presence of RNA in the capsid and is followed by a conformational change of the particle. Myristoylation is required during RNA encapsidation and formation of the mature virus particle. In terms of processing, uridylylated by the polymerase and covalently linked to the 5'-end of genomic RNA. These uridylylated forms act as a nucleotide-peptide primer for the polymerase.

The protein localises to the host nucleus. Its subcellular location is the host cytoplasm. The protein resides in the virion. It localises to the host endoplasmic reticulum membrane. It is found in the host cytoplasmic vesicle membrane. The catalysed reaction is Autocatalytically cleaves itself from the polyprotein of the foot-and-mouth disease virus by hydrolysis of a Lys-|-Gly bond, but then cleaves host cell initiation factor eIF-4G at bonds -Gly-|-Arg- and -Lys-|-Arg-.. The enzyme catalyses a ribonucleoside 5'-triphosphate + H2O = a ribonucleoside 5'-diphosphate + phosphate + H(+). It catalyses the reaction RNA(n) + a ribonucleoside 5'-triphosphate = RNA(n+1) + diphosphate. It carries out the reaction Selective cleavage of Gln-|-Gly bond in the poliovirus polyprotein. In other picornavirus reactions Glu may be substituted for Gln, and Ser or Thr for Gly.. Autocatalytically cleaves itself from the polyprotein at the L/VP0 junction. Also cleaves the host translation initiation factors EIF4G1 and EIF4G3, in order to shut off the capped cellular mRNA transcription. Plays a role in counteracting host innate antiviral response using diverse mechanisms. Possesses a deubiquitinase activity acting on both 'Lys-48' and 'Lys-63'-linked polyubiquitin chains. In turn, inhibits the ubiquitination and subsequent activation of key signaling molecules of type I IFN response such as host RIGI, TBK1, TRAF3 and TRAF6. Inhibits host NF-kappa-B activity by inducing a decrease in RELA mRNA levels. Cleaves a peptide bond in the C-terminus of host ISG15, resulting in the damaging of this modifier that can no longer be attached to target proteins. Also cleaves host G3BP1 and G3BP2 in order to inhibit cytoplasmic stress granules assembly. Functionally, lies on the inner surface of the capsid shell. After binding to the host receptor, the capsid undergoes conformational changes. Capsid protein VP4 is released, capsid protein VP1 N-terminus is externalized, and together, they shape a pore in the host membrane through which the viral genome is translocated into the host cell cytoplasm. After genome has been released, the channel shrinks. Its function is as follows. Forms an icosahedral capsid of pseudo T=3 symmetry with capsid proteins VP1 and VP3. The capsid is composed of 60 copies of each capsid protein organized in the form of twelve pentamers and encloses the viral positive strand RNA genome. Upon acidifcation in the endosome, dissociates into pentamers. In terms of biological role, forms an icosahedral capsid of pseudo T=3 symmetry with capsid proteins VP0 and VP3. The capsid is composed of 60 copies of each capsid protein organized in the form of twelve pentamers and encloses the viral positive strand RNA genome. Upon acidifcation in the endosome, dissociates into pentamers. Forms an icosahedral capsid of pseudo T=3 symmetry with capsid proteins VP2 and VP3. The capsid is composed of 60 copies of each capsid protein organized in the form of twelve pentamers and encloses the viral positive strand RNA genome. Mediates cell entry by attachment to an integrin receptor, usually host ITGAV/ITGB6. In addition, targets host MAVS to suppress type I IFN pathway. Upon acidifcation in the endosome, dissociates into pentamers. Functionally, mediates self-processing of the polyprotein by a translational effect termed 'ribosome skipping'. Mechanistically, 2A-mediated cleavage occurs between the C-terminal glycine and the proline of the downstream protein 2B. In the case of foot-and-mouth disease virus, the 2A oligopeptide is post-translationally 'trimmed' from the C-terminus of the upstream protein 1D by 3C proteinase. Its function is as follows. Plays an essential role in the virus replication cycle by acting as a viroporin. Creates a pore in the host endoplasmic reticulum and as a consequence releases Ca2+ in the cytoplasm of infected cell. In turn, high levels of cytoplasmic calcium may trigger membrane trafficking and transport of viral ER-associated proteins to viroplasms, sites of viral genome replication. In terms of biological role, associates with and induces structural rearrangements of intracellular membranes. Triggers host autophagy by interacting with host BECN1 and thereby promotes viral replication. Participates in viral replication and interacts with host DHX9. Displays RNA-binding, nucleotide binding and NTPase activities. May play a role in virion morphogenesis and viral RNA encapsidation by interacting with the capsid protein VP3. Plays important roles in virus replication, virulence and host range. Cooperates with host DDX56 to inhibit IRF3 nuclear translocation and subsequent type I interferon production. Functionally, covalently linked to the 5'-end of both the positive-strand and negative-strand genomic RNAs. Acts as a genome-linked replication primer. Its function is as follows. Cysteine protease that generates mature viral proteins from the precursor polyprotein. In addition to its proteolytic activity, binds to viral RNA and thus influences viral genome replication. RNA and substrate bind cooperatively to the protease. In terms of biological role, RNA-directed RNA polymerase 3D-POL replicates genomic and antigenomic RNA by recognizing replications specific signals. Covalently attaches UMP to a tyrosine of VPg, which is used to prime RNA synthesis. The positive stranded RNA genome is first replicated at virus induced membranous vesicles, creating a dsRNA genomic replication form. This dsRNA is then used as template to synthesize positive stranded RNA genomes. ss(+)RNA genomes are either translated, replicated or encapsidated. The chain is Genome polyprotein from Bos taurus (Bovine).